The sequence spans 224 residues: N-terminal Xaa-Pro-Lys N-methyltransferase 1 (224 aa).

S-adenosyl-L-methionine-binding positions include G70, R75, 92–94 (DVT), 120–121 (LQ), and Q136.

The protein belongs to the methyltransferase superfamily. NTM1 family.

Its subcellular location is the nucleus. The enzyme catalyses N-terminal L-alanyl-L-prolyl-L-lysyl-[protein] + 3 S-adenosyl-L-methionine = N-terminal N,N,N-trimethyl-L-alanyl-L-prolyl-L-lysyl-[protein] + 3 S-adenosyl-L-homocysteine + 3 H(+). It catalyses the reaction N-terminal L-seryl-L-prolyl-L-lysyl-[protein] + 3 S-adenosyl-L-methionine = N-terminal N,N,N-trimethyl-L-seryl-L-prolyl-L-lysyl-[protein] + 3 S-adenosyl-L-homocysteine + 3 H(+). It carries out the reaction N-terminal L-prolyl-L-prolyl-L-lysyl-[protein] + 2 S-adenosyl-L-methionine = N-terminal N,N-dimethyl-L-prolyl-L-prolyl-L-lysyl-[protein] + 2 S-adenosyl-L-homocysteine + 2 H(+). Its function is as follows. Distributive alpha-N-methyltransferase that methylates the N-terminus of target proteins containing the N-terminal motif [Ala/Gly/Pro/Ser]-Pro-Lys when the initiator Met is cleaved. Specifically catalyzes mono-, di- or tri-methylation of the exposed alpha-amino group of the Ala, Gly or Ser residue in the [Ala/Gly/Ser]-Pro-Lys motif and mono- or di-methylation of Pro in the Pro-Pro-Lys motif. Required during mitosis for normal bipolar spindle formation and chromosome segregation via its action on target proteins. The chain is N-terminal Xaa-Pro-Lys N-methyltransferase 1 (ntmt1) from Xenopus tropicalis (Western clawed frog).